The primary structure comprises 274 residues: tRNA pseudouridine synthase A (274 aa).

The active-site Nucleophile is the D56. Substrate is bound at residue Y109.

Belongs to the tRNA pseudouridine synthase TruA family.

The catalysed reaction is uridine(38/39/40) in tRNA = pseudouridine(38/39/40) in tRNA. In terms of biological role, formation of pseudouridine at positions 38, 39 and 40 in the anticodon stem and loop of transfer RNAs. This Methanosphaera stadtmanae (strain ATCC 43021 / DSM 3091 / JCM 11832 / MCB-3) protein is tRNA pseudouridine synthase A.